The chain runs to 27 residues: NLYQFKNMIQCTTKRSVLEFMEYGCYC.

This sequence belongs to the phospholipase A2 family. Group I subfamily. Requires Ca(2+) as cofactor. As to expression, expressed by the venom gland.

Its subcellular location is the secreted. It catalyses the reaction a 1,2-diacyl-sn-glycero-3-phosphocholine + H2O = a 1-acyl-sn-glycero-3-phosphocholine + a fatty acid + H(+). Snake venom phospholipase A2 (PLA2) that inhibits neuromuscular transmission by blocking acetylcholine release from the nerve termini. PLA2 catalyzes the calcium-dependent hydrolysis of the 2-acyl groups in 3-sn-phosphoglycerides. This is Phospholipase A2 1 from Micrurus nigrocinctus (Central American coral snake).